We begin with the raw amino-acid sequence, 238 residues long: MQFKPALESATLLKRYKRFLADIEFDNGEVRTIHCANTGAMTGCATPGNKVWFSTSDNPKRKYPNSWELSETEQGHRICINTARANQLAVEAIENNVISELCGYDTLQTEVKYGNENSRIDILLSASDKPKCYIEVKSVTLLDETGSAGQGYFPDAVTTRGQKHLRELTEMAQNGSRAILLFTVLHSGIEKVSAAHHIDAKYSLLLKQAQDAGVEVLCYKAELSNTEMKLISAIDFIN.

Belongs to the SfsA family.

This is Sugar fermentation stimulation protein homolog from Vibrio parahaemolyticus serotype O3:K6 (strain RIMD 2210633).